The primary structure comprises 456 residues: Adenylosuccinate synthetase isozyme 1 (456 aa).

A disordered region spans residues Met1–Asn30. GTP-binding positions include Gly41–Lys47 and Gly69–Thr71. Asp42 serves as the catalytic Proton acceptor. Positions 42 and 69 each coordinate Mg(2+). Residue Asp42 participates in substrate binding. IMP contacts are provided by residues Asp42–Lys45 and Asn67–His70. His70 (proton donor) is an active-site residue. Ser130 bears the Phosphoserine mark. Positions 162, 176, 255, 270, and 334 each coordinate IMP. A substrate-binding site is contributed by Val330 to Arg336. Residues Arg336, Lys362 to Asp364, and Gly444 to Lys447 contribute to the GTP site.

The protein belongs to the adenylosuccinate synthetase family. Homodimer. Mg(2+) is required as a cofactor.

It is found in the cytoplasm. The catalysed reaction is IMP + L-aspartate + GTP = N(6)-(1,2-dicarboxyethyl)-AMP + GDP + phosphate + 2 H(+). Its pathway is purine metabolism; AMP biosynthesis via de novo pathway; AMP from IMP: step 1/2. Its function is as follows. Component of the purine nucleotide cycle (PNC), which interconverts IMP and AMP to regulate the nucleotide levels in various tissues, and which contributes to glycolysis and ammoniagenesis. Catalyzes the first committed step in the biosynthesis of AMP from IMP. The sequence is that of Adenylosuccinate synthetase isozyme 1 (adss1) from Danio rerio (Zebrafish).